A 455-amino-acid polypeptide reads, in one-letter code: Gastric inhibitory polypeptide receptor (455 aa).

Residues Met1–Gln18 form the signal peptide. Residues Arg19–Gln135 lie on the Extracellular side of the membrane. 3 disulfide bridges follow: Cys43-Cys67, Cys58-Cys100, and Cys81-Cys115. N-linked (GlcNAc...) asparagine glycans are attached at residues Asn59, Asn69, and Asn74. Residues Val136–Leu158 form a helical membrane-spanning segment. Residues Phe159–Arg166 lie on the Cytoplasmic side of the membrane. Residues Asn167–Thr186 traverse the membrane as a helical segment. Over Arg187 to Arg214 the chain is Extracellular. The chain crosses the membrane as a helical span at residues Thr215–His239. Residues His240–Gly251 are Cytoplasmic-facing. Residues His252–Arg275 traverse the membrane as a helical segment. Residues Tyr276 to Lys290 are Extracellular-facing. The chain crosses the membrane as a helical span at residues Ala291 to Gly316. Over Ile317 to Arg338 the chain is Cytoplasmic. The helical transmembrane segment at Ser339 to Glu359 threads the bilayer. Residues Glu360–Glu374 are Extracellular-facing. The helical transmembrane segment at Ile375 to Glu395 threads the bilayer. Residues Val396 to Cys455 lie on the Cytoplasmic side of the membrane.

The protein belongs to the G-protein coupled receptor 2 family. May form homodimers and heterodimers with GLP1R. Post-translationally, N-glycosylation is required for cell surface expression and lengthens receptor half-life by preventing degradation in the ER. In terms of tissue distribution, present in the pancreas as well as the gut, adipose tissue, heart, pituitary, and inner layers of the adrenal cortex, whereas it is not found in kidney, spleen, or liver. It is also expressed in several brain regions, including the cerebral cortex, hippocampus, and olfactory bulb.

The protein localises to the cell membrane. Functionally, this is a receptor for GIP. The activity of this receptor is mediated by G proteins which activate adenylyl cyclase. This Rattus norvegicus (Rat) protein is Gastric inhibitory polypeptide receptor (Gipr).